Reading from the N-terminus, the 99-residue chain is UPF0235 protein Sbal223_1335 (99 aa).

This sequence belongs to the UPF0235 family.

This chain is UPF0235 protein Sbal223_1335, found in Shewanella baltica (strain OS223).